The following is a 113-amino-acid chain: U11-theraphotoxin-Hhn1a (113 aa).

Residues 1–21 form the signal peptide; it reads MDTVRVAFLLVLVLAVSLGQA. A propeptide spanning residues 22–74 is cleaved from the precursor; sequence DKDENRMEMQEKTEQGKSYLDFAENLLLQKLEELEAKLLEEDSEESRNSRQKR. Basic and acidic residues predominate over residues 60–69; the sequence is LEEDSEESRN. Positions 60-83 are disordered; it reads LEEDSEESRNSRQKRCIGEGVPCD. 3 disulfide bridges follow: Cys75/Cys90, Cys82/Cys95, and Cys89/Cys110.

This sequence belongs to the neurotoxin 14 (magi-1) family. 01 (HNTX-16) subfamily. In terms of tissue distribution, expressed by the venom gland.

The protein localises to the secreted. Probable ion channel inhibitor. This Cyriopagopus hainanus (Chinese bird spider) protein is U11-theraphotoxin-Hhn1a.